A 659-amino-acid polypeptide reads, in one-letter code: 4-alpha-glucanotransferase (659 aa).

The active-site Nucleophile is the E123. D214 (proton donor) is an active-site residue.

This sequence belongs to the glycosyl hydrolase 57 family. Homodimer.

The enzyme catalyses Transfers a segment of a (1-&gt;4)-alpha-D-glucan to a new position in an acceptor, which may be glucose or a (1-&gt;4)-alpha-D-glucan.. With respect to regulation, inhibited by p-chloromercuribenzoic acid, monoiodoacetic acid, mercury and nickel ions. Catalyzes the transglycosylation of maltooligosaccharides, yielding maltooligosaccharides of various lengths and glucose. Maltose and glucose can be used as acceptors in the transfer reaction. The polypeptide is 4-alpha-glucanotransferase (jgt) (Thermococcus litoralis (strain ATCC 51850 / DSM 5473 / JCM 8560 / NS-C)).